A 622-amino-acid chain; its full sequence is Chaperone protein HscA homolog (622 aa).

This sequence belongs to the heat shock protein 70 family.

Chaperone involved in the maturation of iron-sulfur cluster-containing proteins. Has a low intrinsic ATPase activity which is markedly stimulated by HscB. This chain is Chaperone protein HscA homolog, found in Burkholderia pseudomallei (strain 1710b).